The following is a 164-amino-acid chain: UPF0114 protein Spro_2386 (164 aa).

Helical transmembrane passes span 15-35, 53-73, and 136-156; these read LLAP…IKFF, LVLT…LVMV, and LMWY…MGYL.

This sequence belongs to the UPF0114 family.

Its subcellular location is the cell membrane. In Serratia proteamaculans (strain 568), this protein is UPF0114 protein Spro_2386.